Here is a 134-residue protein sequence, read N- to C-terminus: Profilin-2 (134 aa).

A disulfide bridge links Cys13 with Cys118. Positions 84-100 (AVIRGKKGSGGITIKKT) match the Involved in PIP2 interaction motif. Residue Thr114 is modified to Phosphothreonine.

This sequence belongs to the profilin family. As to quaternary structure, occurs in many kinds of cells as a complex with monomeric actin in a 1:1 ratio. Phosphorylated by MAP kinases.

It localises to the cytoplasm. It is found in the cytoskeleton. Its function is as follows. Binds to actin and affects the structure of the cytoskeleton. At high concentrations, profilin prevents the polymerization of actin, whereas it enhances it at low concentrations. This Olea europaea (Common olive) protein is Profilin-2.